We begin with the raw amino-acid sequence, 186 residues long: ATP synthase subunit b' (186 aa).

A helical membrane pass occupies residues 39–59 (IFWLLLALGAIYWLLKNIAIP).

Belongs to the ATPase B chain family. As to quaternary structure, F-type ATPases have 2 components, F(1) - the catalytic core - and F(0) - the membrane proton channel. F(1) has five subunits: alpha(3), beta(3), gamma(1), delta(1), epsilon(1). F(0) has four main subunits: a(1), b(1), b'(1) and c(10-14). The alpha and beta chains form an alternating ring which encloses part of the gamma chain. F(1) is attached to F(0) by a central stalk formed by the gamma and epsilon chains, while a peripheral stalk is formed by the delta, b and b' chains.

The protein resides in the cellular chromatophore membrane. Functionally, f(1)F(0) ATP synthase produces ATP from ADP in the presence of a proton or sodium gradient. F-type ATPases consist of two structural domains, F(1) containing the extramembraneous catalytic core and F(0) containing the membrane proton channel, linked together by a central stalk and a peripheral stalk. During catalysis, ATP synthesis in the catalytic domain of F(1) is coupled via a rotary mechanism of the central stalk subunits to proton translocation. Component of the F(0) channel, it forms part of the peripheral stalk, linking F(1) to F(0). The b'-subunit is a diverged and duplicated form of b found in plants and photosynthetic bacteria. This chain is ATP synthase subunit b', found in Rhodobacter capsulatus (Rhodopseudomonas capsulata).